The primary structure comprises 135 residues: MLSPKRTRFRKQHRGRMKGISHRGNQICFGRYALQALEPAWITSRQIEAGRRAMSRNVRRGGQIWVRIFPDKPVTVRPTETRMGSGKGSPEYWVAVVKPGKIVYEMGGVAENIARKAISIAASKMPIRTQFIISG.

It belongs to the universal ribosomal protein uL16 family. As to quaternary structure, part of the 50S ribosomal subunit.

It is found in the plastid. The protein localises to the chloroplast. The protein is Large ribosomal subunit protein uL16c of Lotus japonicus (Lotus corniculatus var. japonicus).